Consider the following 175-residue polypeptide: NADH dehydrogenase [ubiquinone] iron-sulfur protein 4, mitochondrial (175 aa).

The N-terminal 42 residues, 1–42 (MAAVSISVSLRQAMLGRRAMATAAVSVCRVPSRLLSTSTWKL), are a transit peptide targeting the mitochondrion. The residue at position 173 (Ser173) is a Phosphoserine.

This sequence belongs to the complex I NDUFS4 subunit family. This is a component of the iron-sulfur (IP) fragment of the enzyme. Interacts with BCAP31 and TOMM40; the interaction mediates its translocation to the mitochondria; the interaction with BCAP31 is direct.

The protein localises to the mitochondrion inner membrane. Its function is as follows. Accessory subunit of the mitochondrial membrane respiratory chain NADH dehydrogenase (Complex I), that is believed not to be involved in catalysis. Complex I functions in the transfer of electrons from NADH to the respiratory chain. The immediate electron acceptor for the enzyme is believed to be ubiquinone. In Mus musculus (Mouse), this protein is NADH dehydrogenase [ubiquinone] iron-sulfur protein 4, mitochondrial (Ndufs4).